The sequence spans 78 residues: Large ribosomal subunit protein uL29 (78 aa).

The disordered stretch occupies residues 59-78; the sequence is VESERKRGKSLSSTQTQKEE. Polar residues predominate over residues 68-78; sequence SLSSTQTQKEE.

It belongs to the universal ribosomal protein uL29 family.

The sequence is that of Large ribosomal subunit protein uL29 from Synechococcus sp. (strain JA-3-3Ab) (Cyanobacteria bacterium Yellowstone A-Prime).